Here is a 181-residue protein sequence, read N- to C-terminus: Large ribosomal subunit protein uL10 (181 aa).

This sequence belongs to the universal ribosomal protein uL10 family. Part of the ribosomal stalk of the 50S ribosomal subunit. The N-terminus interacts with L11 and the large rRNA to form the base of the stalk. The C-terminus forms an elongated spine to which L12 dimers bind in a sequential fashion forming a multimeric L10(L12)X complex.

Its function is as follows. Forms part of the ribosomal stalk, playing a central role in the interaction of the ribosome with GTP-bound translation factors. The chain is Large ribosomal subunit protein uL10 from Amoebophilus asiaticus (strain 5a2).